A 381-amino-acid polypeptide reads, in one-letter code: Putative heat shock protein HSP 90-beta 2 (381 aa).

Residues Asn46, Asp88, and Lys107 each contribute to the ATP site. Over residues 145–174 (KEISDGKAEEEKGEKEEENKDDEEKPKIED) the composition is skewed to basic and acidic residues. Residues 145–192 (KEISDGKAEEEKGEKEEENKDDEEKPKIEDVGSDEEDDSGKDKKKKTK) form a disordered region. Ser177 bears the Phosphoserine mark. A coiled-coil region spans residues 315–347 (ELPEDGEEKKRMEERKAKFENLCKFMKETLDKK).

The protein belongs to the heat shock protein 90 family. Homodimer.

Its subcellular location is the cytoplasm. Functionally, putative molecular chaperone that may promote the maturation, structural maintenance and proper regulation of specific target proteins. The sequence is that of Putative heat shock protein HSP 90-beta 2 (HSP90AB2P) from Homo sapiens (Human).